A 405-amino-acid chain; its full sequence is Glucose-1-phosphate adenylyltransferase (405 aa).

Residues tyrosine 96, glycine 161, 176 to 177 (EK), and serine 194 contribute to the alpha-D-glucose 1-phosphate site.

This sequence belongs to the bacterial/plant glucose-1-phosphate adenylyltransferase family. As to quaternary structure, homotetramer.

The enzyme catalyses alpha-D-glucose 1-phosphate + ATP + H(+) = ADP-alpha-D-glucose + diphosphate. The protein operates within glycan biosynthesis; glycogen biosynthesis. Its function is as follows. Involved in the biosynthesis of ADP-glucose, a building block required for the elongation reactions to produce glycogen. Catalyzes the reaction between ATP and alpha-D-glucose 1-phosphate (G1P) to produce pyrophosphate and ADP-Glc. The sequence is that of Glucose-1-phosphate adenylyltransferase from Aliivibrio fischeri (strain MJ11) (Vibrio fischeri).